We begin with the raw amino-acid sequence, 410 residues long: E3 ubiquitin-protein ligase PRT1 (410 aa).

RING-type zinc fingers lie at residues 26–66 (CCVC…PICR) and 192–232 (CSAC…QECN). The ZZ-type zinc-finger motif lies at 306–370 (HFGAGCDSCG…RLELARSPQV (65 aa)). Cysteine 311, cysteine 314, cysteine 326, cysteine 329, cysteine 338, cysteine 341, histidine 356, and histidine 360 together coordinate Zn(2+). The segment at 385-410 (ISNEGMDTDEGEEGPPGSSNESSSTE) is disordered. A compositionally biased stretch (low complexity) spans 399 to 410 (PPGSSNESSSTE).

It is found in the cytoplasm. The catalysed reaction is S-ubiquitinyl-[E2 ubiquitin-conjugating enzyme]-L-cysteine + [acceptor protein]-L-lysine = [E2 ubiquitin-conjugating enzyme]-L-cysteine + N(6)-ubiquitinyl-[acceptor protein]-L-lysine.. Its pathway is protein modification; protein ubiquitination. Its function is as follows. E3 ubiquitin-protein ligase that mediates ubiquitination and subsequent proteasomal degradation of target proteins. Functions in the N-end rule pathway of protein degradation, where it specifically recognizes and ubiquitinates proteins with a N-terminal bulky aromatic amino acid (Phe). Does not act on aliphatic hydrophobic and basic N-terminal residues (Arg or Leu) containing proteins. This Arabidopsis thaliana (Mouse-ear cress) protein is E3 ubiquitin-protein ligase PRT1 (PRT1).